The chain runs to 172 residues: Ribosome maturation factor RimM (172 aa).

The region spanning 95–168 (AEGEFYYHQI…RVDVEIMEGL (74 aa)) is the PRC barrel domain.

It belongs to the RimM family. In terms of assembly, binds ribosomal protein uS19.

It is found in the cytoplasm. An accessory protein needed during the final step in the assembly of 30S ribosomal subunit, possibly for assembly of the head region. Essential for efficient processing of 16S rRNA. May be needed both before and after RbfA during the maturation of 16S rRNA. It has affinity for free ribosomal 30S subunits but not for 70S ribosomes. This is Ribosome maturation factor RimM from Streptococcus equi subsp. equi (strain 4047).